The sequence spans 81 residues: Omega-conotoxin-like Vc6.4 (81 aa).

The first 22 residues, 1–22 (MKLTCVMIVAVLFLTANTFVTA), serve as a signal peptide directing secretion. The propeptide occupies 23–51 (VPHSSNVLENLYLKARHEMENPEASKLNT). Disulfide bonds link cysteine 55–cysteine 72, cysteine 62–cysteine 76, and cysteine 71–cysteine 80.

This sequence belongs to the conotoxin O1 superfamily. Expressed by the venom duct.

It localises to the secreted. Its function is as follows. Omega-conotoxins act at presynaptic membranes, they bind and block voltage-gated calcium channels. Act on high voltage-activated (HVA) calcium currents in molluscan neurons. The protein is Omega-conotoxin-like Vc6.4 of Conus victoriae (Queen Victoria cone).